A 306-amino-acid chain; its full sequence is Apolipoprotein E (306 aa).

A signal peptide spans 1–18 (MKVLWAVLVVTLLAGCQA). 8 tandem repeats follow at residues 81-102 (VLME…QELG), 103-124 (PMAE…ARLG), 125-146 (ADME…TMLG), 147-168 (QSAE…KRLL), 169-190 (RDAE…EGAE), 191-212 (RGVS…LRAA), 213-230 (QTSQ…ERLR), and 231-252 (GRLE…EQME). Residues 81 to 252 (VLMEDTMKEV…RLDVVREQME (172 aa)) form an 8 X 22 AA approximate tandem repeats region. Met-144 carries the post-translational modification Methionine sulfoxide. The residue at position 148 (Ser-148) is a Phosphoserine. The interval 159 to 169 (HLRKLRKRLLR) is LDL and other lipoprotein receptors binding. A heparin-binding site is contributed by 163–166 (LRKR). Residues 211 to 280 (AAQTSQPLRE…GWFEPVVEDM (70 aa)) are lipid-binding and lipoprotein association. A heparin-binding site is contributed by 226-233 (GERLRGRL). A specificity for association with VLDL region spans residues 268-280 (RLKGWFEPVVEDM).

Belongs to the apolipoprotein A1/A4/E family. Homotetramer. May interact with ABCA1; functionally associated with ABCA1 in the biogenesis of HDLs. May interact with APP/A4 amyloid-beta peptide; the interaction is extremely stable in vitro but its physiological significance is unclear. May interact with MAPT. May interact with MAP2. In the cerebrospinal fluid, interacts with secreted SORL1. Interacts with PMEL; this allows the loading of PMEL luminal fragment on ILVs to induce fibril nucleation. In terms of processing, APOE exists as multiple glycosylated and sialylated glycoforms within cells and in plasma. The extent of glycosylation and sialylation are tissue and context specific. Glycated in plasma VLDL. Post-translationally, phosphorylated by FAM20C in the extracellular medium.

It is found in the secreted. Its subcellular location is the extracellular space. It localises to the extracellular matrix. The protein resides in the extracellular vesicle. The protein localises to the endosome. It is found in the multivesicular body. APOE is an apolipoprotein, a protein associating with lipid particles, that mainly functions in lipoprotein-mediated lipid transport between organs via the plasma and interstitial fluids. APOE is a core component of plasma lipoproteins and is involved in their production, conversion and clearance. Apolipoproteins are amphipathic molecules that interact both with lipids of the lipoprotein particle core and the aqueous environment of the plasma. As such, APOE associates with chylomicrons, chylomicron remnants, very low density lipoproteins (VLDL) and intermediate density lipoproteins (IDL) but shows a preferential binding to high-density lipoproteins (HDL). It also binds a wide range of cellular receptors including the LDL receptor/LDLR, the LDL receptor-related proteins LRP1, LRP2 and LRP8 and the very low-density lipoprotein receptor/VLDLR that mediate the cellular uptake of the APOE-containing lipoprotein particles. Finally, APOE also has a heparin-binding activity and binds heparan-sulfate proteoglycans on the surface of cells, a property that supports the capture and the receptor-mediated uptake of APOE-containing lipoproteins by cells. A main function of APOE is to mediate lipoprotein clearance through the uptake of chylomicrons, VLDLs, and HDLs by hepatocytes. APOE is also involved in the biosynthesis by the liver of VLDLs as well as their uptake by peripheral tissues ensuring the delivery of triglycerides and energy storage in muscle, heart and adipose tissues. By participating in the lipoprotein-mediated distribution of lipids among tissues, APOE plays a critical role in plasma and tissues lipid homeostasis. APOE is also involved in two steps of reverse cholesterol transport, the HDLs-mediated transport of cholesterol from peripheral tissues to the liver, and thereby plays an important role in cholesterol homeostasis. First, it is functionally associated with ABCA1 in the biogenesis of HDLs in tissues. Second, it is enriched in circulating HDLs and mediates their uptake by hepatocytes. APOE also plays an important role in lipid transport in the central nervous system, regulating neuron survival and sprouting. This chain is Apolipoprotein E (APOE), found in Hystrix brachyura (Malayan porcupine).